A 1360-amino-acid chain; its full sequence is TRAF2 and NCK-interacting protein kinase (1360 aa).

In terms of domain architecture, Protein kinase spans 25–289 (FELVELVGNG…TEQLMKHPFI (265 aa)). ATP-binding positions include 31 to 39 (VGNGTYGQV) and lysine 54. The active-site Proton acceptor is the aspartate 153. Phosphothreonine is present on threonine 187. Disordered regions lie at residues 284 to 347 (MKHP…LPGE), 398 to 440 (QKEQ…RRRA), and 539 to 589 (ERSR…RPVD). The segment covering 288–307 (FIRDQPNERQVRIQLKDHID) has biased composition (basic and acidic residues). Residues 290 to 1047 (RDQPNERQVR…EIRKYKKRFN (758 aa)) form a mediates interaction with NEDD4 region. The segment covering 317 to 335 (DETEYEYSGSEEEEEENDS) has biased composition (acidic residues). Serine 324 and serine 326 each carry phosphoserine. A phosphoserine mark is found at serine 560 and serine 570. Position 581 is a phosphothreonine (threonine 581). A phosphoserine mark is found at serine 600, serine 608, serine 610, and serine 640. 4 disordered regions span residues 601-801 (QGPA…KAID), 814-878 (LRIE…YNVG), 908-927 (TSGEKKRSGHSDSNGFAGHI), and 933-998 (VQQS…ESSA). Over residues 652–669 (RIEKFDRSSWLRQEEDIP) the composition is skewed to basic and acidic residues. Phosphoserine occurs at positions 678, 680, 688, 701, 707, 720, 764, 766, and 769. The span at 720–755 (SPLQRTSSGSSSSSSTPSSQPSSQGGSQPGSQAGSS) shows a compositional bias: low complexity. 2 stretches are compositionally biased toward basic and acidic residues: residues 775-789 (EPAKVKPEESRDITR) and 814-827 (LRIEETNRPMKKVT). Acidic residues predominate over residues 834 to 847 (EESESSEEEEEDGE). Residues 908 to 917 (TSGEKKRSGH) are compositionally biased toward basic and acidic residues. A Phosphoserine modification is found at serine 959. Residues 987 to 996 (TDEDEEDEES) show a composition bias toward acidic residues. The 288-residue stretch at 1047–1334 (NSEILCAALW…KFLCERNDKV (288 aa)) folds into the CNH domain.

Belongs to the protein kinase superfamily. STE Ser/Thr protein kinase family. STE20 subfamily. In terms of assembly, interacts (via the CNH domain) with RAP2A (GTP-bound form preferentially); the interaction is direct and required for the activation of TNIK by RAP2A. Interacts with NEDD4; recruits RAP2A to NEDD4. Interacts with TRAF2 and NCK. Interacts with TCF7L2/TCF4 and CTNNB1; the interaction is direct. Interacts with TANC1. Post-translationally, autophosphorylated. Autophosphorylation is activated by RAP2A and induces association to the cytoskeletal fraction. In terms of tissue distribution, expressed ubiquitously. Highest levels observed in heart, brain and skeletal muscle. Expressed in normal colonic epithelia and colorectal cancer tissues.

The protein localises to the nucleus. The protein resides in the cytoplasm. It is found in the recycling endosome. It localises to the cytoskeleton. It carries out the reaction L-seryl-[protein] + ATP = O-phospho-L-seryl-[protein] + ADP + H(+). It catalyses the reaction L-threonyl-[protein] + ATP = O-phospho-L-threonyl-[protein] + ADP + H(+). Its function is as follows. Serine/threonine kinase that acts as an essential activator of the Wnt signaling pathway. Recruited to promoters of Wnt target genes and required to activate their expression. May act by phosphorylating TCF4/TCF7L2. Appears to act upstream of the JUN N-terminal pathway. May play a role in the response to environmental stress. Part of a signaling complex composed of NEDD4, RAP2A and TNIK which regulates neuronal dendrite extension and arborization during development. More generally, it may play a role in cytoskeletal rearrangements and regulate cell spreading. Phosphorylates SMAD1 on Thr-322. Activator of the Hippo signaling pathway which plays a pivotal role in organ size control and tumor suppression by restricting proliferation and promoting apoptosis. MAP4Ks act in parallel to and are partially redundant with STK3/MST2 and STK4/MST2 in the phosphorylation and activation of LATS1/2, and establish MAP4Ks as components of the expanded Hippo pathway. This is TRAF2 and NCK-interacting protein kinase from Homo sapiens (Human).